The chain runs to 153 residues: Nucleoside diphosphate kinase (153 aa).

ATP contacts are provided by K13, F61, R89, T95, R106, and N116. H119 serves as the catalytic Pros-phosphohistidine intermediate.

The protein belongs to the NDK family. The cofactor is Mg(2+).

It localises to the cytoplasm. The protein resides in the cell membrane. The catalysed reaction is a 2'-deoxyribonucleoside 5'-diphosphate + ATP = a 2'-deoxyribonucleoside 5'-triphosphate + ADP. It catalyses the reaction a ribonucleoside 5'-diphosphate + ATP = a ribonucleoside 5'-triphosphate + ADP. In terms of biological role, major role in the synthesis of nucleoside triphosphates other than ATP. The ATP gamma phosphate is transferred to the NDP beta phosphate via a ping-pong mechanism, using a phosphorylated active-site intermediate. The sequence is that of Nucleoside diphosphate kinase from Gallus gallus (Chicken).